The primary structure comprises 428 residues: Putative POM121-like protein 1 (428 aa).

Disordered regions lie at residues Met1–Pro23, Lys36–Leu204, Asp254–Gln293, Thr306–Leu384, and Gly402–Lys428. Residues Glu44–Pro62 are compositionally biased toward basic and acidic residues. The span at Gln106–Thr117 shows a compositional bias: low complexity. Polar residues-rich tracts occupy residues Asn118–Thr129, Ser144–Thr155, Pro260–Thr269, Phe326–Ser347, and Pro403–Asn415. Residues Gln416–Lys428 are compositionally biased toward low complexity.

This sequence belongs to the POM121 family.

This Homo sapiens (Human) protein is Putative POM121-like protein 1 (POM121L1P).